The following is a 210-amino-acid chain: Somatotropin-2 (210 aa).

Positions 1-22 (MGQVFLLMPVLLVSCFLGQGAA) are cleaved as a signal peptide. Residue His38 coordinates Zn(2+). An intrachain disulfide couples Cys71 to Cys183. Glu192 contacts Zn(2+). Cys200 and Cys208 form a disulfide bridge.

The protein belongs to the somatotropin/prolactin family.

It localises to the secreted. Its function is as follows. Growth hormone plays an important role in growth control and is involved in the regulation of several anabolic processes. Implicated as an osmoregulatory substance important for seawater adaptation. This chain is Somatotropin-2 (gh2), found in Oncorhynchus mykiss (Rainbow trout).